The sequence spans 1102 residues: Voltage-gated delayed rectifier potassium channel KCNH8 (1102 aa).

Over 1–225 the chain is Cytoplasmic; it reads MPVMKGLLAP…HFSTFKAGWD (225 aa). Positions 18–90 constitute a PAS domain; the sequence is IATRFDGTHS…LQIEKSLEEK (73 aa). In terms of domain architecture, PAC spans 93-145; it reads FKGEIMFYKKNGAPFWCLLDIVPIKNEKGDVVLFLASFKDITDTKVKITSEDK. A compositionally biased stretch (basic and acidic residues) spans 142–151; sequence SEDKKEDRTK. The disordered stretch occupies residues 142-162; that stretch reads SEDKKEDRTKGRSRAGSHFDS. The helical transmembrane segment at 226-246 threads the bilayer; the sequence is WLILLATFYVAVTVPYNVCFI. The Extracellular segment spans residues 247–255; the sequence is GNEDLSTTR. Residues 256–276 traverse the membrane as a helical segment; it reads STTVSDIAVEILFIIDIILNF. Topologically, residues 277–298 are cytoplasmic; that stretch reads RTTYVSKSGQVIFEARSICIHY. Residues 299–319 form a helical membrane-spanning segment; that stretch reads VTTWFIIDLIAALPFDLLYAF. Asn-320 carries an N-linked (GlcNAc...) asparagine glycan. Over 320 to 327 the chain is Extracellular; the sequence is NVTVVSLV. A helical; Voltage-sensor membrane pass occupies residues 328-348; that stretch reads HLLKTVRLLRLLRLLQKLDRY. Topologically, residues 349-357 are cytoplasmic; that stretch reads SQHSTIVLT. A helical transmembrane segment spans residues 358-378; the sequence is LLMSMFALLAHWMACIWYVIG. Over 379–419 the chain is Extracellular; sequence KMEREDNSLLKWEVGWLHELGKRLESPYYGNNTLGGPSIRS. Asn-409 carries N-linked (GlcNAc...) asparagine glycosylation. An intramembrane region (pore-forming) is located at residues 420–440; sequence AYIAALYFTLSSLTSVGFGNV. The Selectivity filter motif lies at 434-439; sequence SVGFGN. Topologically, residues 441 to 448 are extracellular; it reads SANTDAEK. A helical transmembrane segment spans residues 449–469; that stretch reads IFSICTMLIGALMHALVFGNV. Residues 470-1102 are Cytoplasmic-facing; that stretch reads TAIIQRMYSR…DVKDSKAINV (633 aa). The cNMP-binding domain stretch occupies residues 551 to 668; it reads LFECASRGCL…HKFVEDIQHD (118 aa). Residues 684–693 are compositionally biased toward polar residues; that stretch reads RLSNKSTVSQ. 3 disordered regions span residues 684-743, 764-841, and 960-991; these read RLSN…KKTG, HSPI…PEPR, and LVGS…YSPS. The span at 710–723 shows a compositional bias: acidic residues; the sequence is VEDEEEEEVEEEET. The segment covering 724 to 737 has biased composition (polar residues); it reads TSLSPIYTRGSSVS. Residues 968 to 984 are compositionally biased toward basic and acidic residues; it reads TEAHEQNPADSELHHSP.

The protein belongs to the potassium channel family. H (Eag) (TC 1.A.1.20) subfamily. Kv12.1/KCNH8 sub-subfamily. The potassium channel is probably composed of a homo- or heterotetrameric complex of pore-forming alpha subunits that can associate with modulating beta subunits.

The protein localises to the membrane. It carries out the reaction K(+)(in) = K(+)(out). Its function is as follows. Pore-forming (alpha) subunit of a voltage-gated delayed rectifier potassium channel that mediates outward-rectifying potassium currents. Elicits a slowly activating, non-inactivating and slowly deactivation outwards potassium current at depolarizating voltages from -30 mV to +50mV. Shows no obvious change in the activation rate from different holding potentials. Activation is strongly dependent on the pH of the external solution. This is Voltage-gated delayed rectifier potassium channel KCNH8 from Mus musculus (Mouse).